A 577-amino-acid polypeptide reads, in one-letter code: Probable ATP-dependent RNA helicase DDX55 homolog (577 aa).

The Q motif motif lies at 7–37; sequence AVATKTYREKLGPEILEVFDKSYKSFTDVQV. The 179-residue stretch at 40–218 folds into the Helicase ATP-binding domain; it reads GTHLLNLSDV…VFGLRNAKQV (179 aa). 53-60 contacts ATP; it reads SPTGSGKT. The DEAD box signature appears at 166–169; it reads DEAD. The Helicase C-terminal domain maps to 231 to 393; the sequence is TLKNYFVECP…EVKVPTSTSR (163 aa). A disordered region spans residues 508 to 577; the sequence is AKEKKRREKE…LSKKEIKDVL (70 aa). Residues 510–530 show a composition bias toward basic residues; it reads EKKRREKEARKMKRAGGRFKS.

This sequence belongs to the DEAD box helicase family. DDX55/SPB4 subfamily.

It catalyses the reaction ATP + H2O = ADP + phosphate + H(+). In terms of biological role, probable ATP-binding RNA helicase. The sequence is that of Probable ATP-dependent RNA helicase DDX55 homolog from Caenorhabditis briggsae.